Consider the following 77-residue polypeptide: uncharacterized protein (77 aa).

The chain crosses the membrane as a helical span at residues 49 to 71; sequence LVIASLILAIILLGILYYISYQM.

It localises to the membrane. This is an uncharacterized protein from Archaeoglobus fulgidus (strain ATCC 49558 / DSM 4304 / JCM 9628 / NBRC 100126 / VC-16).